A 118-amino-acid polypeptide reads, in one-letter code: Mitochondrial import inner membrane translocase subunit Tim10 B (118 aa).

Residues 31–55 (CFQRCVPSLHHRALDAEEEACLHSC) carry the Twin CX3C motif motif. 2 cysteine pairs are disulfide-bonded: Cys-31–Cys-55 and Cys-35–Cys-51. The tract at residues 89–118 (SAVPHATAEQLETSPSRSLPSGNLGKGGAG) is disordered. Polar residues predominate over residues 98-109 (QLETSPSRSLPS).

Belongs to the small Tim family. As to quaternary structure, component of the TIM22 complex, which core is composed of TIMM22, associated with TIMM10 (TIMM10A and/or TIMM10B), TIMM9, AGK and TIMM29.

It localises to the mitochondrion inner membrane. Its function is as follows. Component of the TIM22 complex, a complex that mediates the import and insertion of multi-pass transmembrane proteins into the mitochondrial inner membrane. The TIM22 complex forms a twin-pore translocase that uses the membrane potential as the external driving force. In the TIM22 complex, it may act as a docking point for the soluble 70 kDa complex that guides the target proteins in transit through the aqueous mitochondrial intermembrane space. The protein is Mitochondrial import inner membrane translocase subunit Tim10 B (TIMM10B) of Bos taurus (Bovine).